A 317-amino-acid polypeptide reads, in one-letter code: Transaldolase (317 aa).

Lys126 (schiff-base intermediate with substrate) is an active-site residue.

Belongs to the transaldolase family. Type 1 subfamily. In terms of assembly, homodimer.

The protein resides in the cytoplasm. The enzyme catalyses D-sedoheptulose 7-phosphate + D-glyceraldehyde 3-phosphate = D-erythrose 4-phosphate + beta-D-fructose 6-phosphate. It participates in carbohydrate degradation; pentose phosphate pathway; D-glyceraldehyde 3-phosphate and beta-D-fructose 6-phosphate from D-ribose 5-phosphate and D-xylulose 5-phosphate (non-oxidative stage): step 2/3. Functionally, transaldolase is important for the balance of metabolites in the pentose-phosphate pathway. This Burkholderia pseudomallei (strain K96243) protein is Transaldolase.